The sequence spans 234 residues: MEGGAYGAGKAGGAFDPYTLVRQPHTILRVVSWVFSIVVFGSIVNEGYLNNPEEEEEFCIYNRNPNACSYGVTVGVLAFLTCLLYLALDVYFPQISSVKDRKKAVLSDIGVSAFWAFFWFVGFCFLANQWQVSKPKDNPLNEGTDAARAAIAFSFFSIFTWAGQAVLAFQRYQIGADSALFSQDYMDPSQDSSMPYAPYVEPSAGSDPAGMGGTYQHPANAFDAEPQGYQSQGY.

At Met-1 the chain carries N-acetylmethionine. Residues 1 to 23 are Cytoplasmic-facing; that stretch reads MEGGAYGAGKAGGAFDPYTLVRQ. In terms of domain architecture, MARVEL spans 20 to 173; the sequence is LVRQPHTILR…QAVLAFQRYQ (154 aa). The helical transmembrane segment at 24 to 44 threads the bilayer; sequence PHTILRVVSWVFSIVVFGSIV. Residues 45 to 71 are Lumenal-facing; it reads NEGYLNNPEEEEEFCIYNRNPNACSYG. The helical transmembrane segment at 72 to 92 threads the bilayer; that stretch reads VTVGVLAFLTCLLYLALDVYF. At 93–103 the chain is on the cytoplasmic side; sequence PQISSVKDRKK. Residues 104–124 form a helical membrane-spanning segment; the sequence is AVLSDIGVSAFWAFFWFVGFC. Over 125–148 the chain is Lumenal; that stretch reads FLANQWQVSKPKDNPLNEGTDAAR. A helical transmembrane segment spans residues 149–169; the sequence is AAIAFSFFSIFTWAGQAVLAF. Residues 170 to 234 lie on the Cytoplasmic side of the membrane; sequence QRYQIGADSA…EPQGYQSQGY (65 aa). Residues 201-234 are disordered; sequence EPSAGSDPAGMGGTYQHPANAFDAEPQGYQSQGY.

It belongs to the synaptogyrin family.

Its subcellular location is the cytoplasmic vesicle. The protein localises to the secretory vesicle. It localises to the synaptic vesicle membrane. It is found in the melanosome. Its function is as follows. May play a role in regulated exocytosis. Modulates the localization of synaptophysin/SYP into synaptic-like microvesicles and may therefore play a role in synaptic-like microvesicle formation and/or maturation. Involved in the regulation of short-term and long-term synaptic plasticity. The sequence is that of Synaptogyrin-1 from Mus musculus (Mouse).